The sequence spans 253 residues: Ribosomal RNA small subunit methyltransferase J (253 aa).

Residues 98-99, 114-115, 150-151, and aspartate 172 each bind S-adenosyl-L-methionine; these read RD, ER, and SS.

The protein belongs to the methyltransferase superfamily. RsmJ family.

It is found in the cytoplasm. The catalysed reaction is guanosine(1516) in 16S rRNA + S-adenosyl-L-methionine = N(2)-methylguanosine(1516) in 16S rRNA + S-adenosyl-L-homocysteine + H(+). Functionally, specifically methylates the guanosine in position 1516 of 16S rRNA. The protein is Ribosomal RNA small subunit methyltransferase J of Shewanella pealeana (strain ATCC 700345 / ANG-SQ1).